The following is a 281-amino-acid chain: NADPH-dependent 7-cyano-7-deazaguanine reductase (281 aa).

88–90 (VES) contributes to the substrate binding site. 90–91 (SK) serves as a coordination point for NADPH. C189 serves as the catalytic Thioimide intermediate. D196 (proton donor) is an active-site residue. A substrate-binding site is contributed by 228-229 (HE). 257-258 (RG) contacts NADPH.

The protein belongs to the GTP cyclohydrolase I family. QueF type 2 subfamily. In terms of assembly, homodimer.

It is found in the cytoplasm. It carries out the reaction 7-aminomethyl-7-carbaguanine + 2 NADP(+) = 7-cyano-7-deazaguanine + 2 NADPH + 3 H(+). Its pathway is tRNA modification; tRNA-queuosine biosynthesis. Catalyzes the NADPH-dependent reduction of 7-cyano-7-deazaguanine (preQ0) to 7-aminomethyl-7-deazaguanine (preQ1). The protein is NADPH-dependent 7-cyano-7-deazaguanine reductase of Klebsiella pneumoniae (strain 342).